A 535-amino-acid polypeptide reads, in one-letter code: Putative cysteine ligase BshC (535 aa).

Residues 420-477 (DTFKALKESINSAYKNLQEKLAPLGADFQKLTGENLGRVMAQVKYLEERAQKYHREKN) adopt a coiled-coil conformation.

It belongs to the BshC family.

Its function is as follows. Involved in bacillithiol (BSH) biosynthesis. May catalyze the last step of the pathway, the addition of cysteine to glucosamine malate (GlcN-Mal) to generate BSH. This Carboxydothermus hydrogenoformans (strain ATCC BAA-161 / DSM 6008 / Z-2901) protein is Putative cysteine ligase BshC.